Consider the following 106-residue polypeptide: Nucleoid-associated protein DP1429 (106 aa).

Belongs to the YbaB/EbfC family. Homodimer.

The protein localises to the cytoplasm. The protein resides in the nucleoid. Binds to DNA and alters its conformation. May be involved in regulation of gene expression, nucleoid organization and DNA protection. The polypeptide is Nucleoid-associated protein DP1429 (Desulfotalea psychrophila (strain LSv54 / DSM 12343)).